We begin with the raw amino-acid sequence, 201 residues long: MPFKPLVTAGIESLLNTFLYRSPALKTARSRLLGKVLRVEVKGFSTSLILVFSERQVDVLGEWAGDADCTVIAYASVLPKLRDRQQLTALIRSGELEVQGDIQVVQNFVALADLAEFDPAELLAPYTGDIAAEGISKAMRGGAKFLHHGIKRQQRYVAEAITEEWRMAPGPLEVAWFAEETAAVERAVDALTKRLEKLEAK.

The SCP2 domain maps to leucine 15–alanine 112.

It belongs to the UbiJ family. In terms of assembly, component of the Ubi complex metabolon, which regroups five ubiquinone biosynthesis proteins (UbiE, UbiF, UbiG, UbiH and UbiI) and two accessory factors (UbiK and the lipid-binding protein UbiJ). Interacts with UbiK and forms a complex composed of 2 UbiK subunits and 1 UbiJ subunit. The UbiK-UbiJ complex interacts with palmitoleic acid.

The protein resides in the cytoplasm. It functions in the pathway cofactor biosynthesis; ubiquinone biosynthesis. Functionally, required for ubiquinone (coenzyme Q) biosynthesis under aerobic conditions. Binds hydrophobic ubiquinone biosynthetic intermediates via its SCP2 domain and is essential for the stability of the Ubi complex. May constitute a docking platform where Ubi enzymes assemble and access their SCP2-bound polyprenyl substrates. This is Ubiquinone biosynthesis accessory factor UbiJ from Escherichia coli (strain K12).